Consider the following 337-residue polypeptide: Ketol-acid reductoisomerase (NADP(+)) (337 aa).

The KARI N-terminal Rossmann domain maps to 1–180 (MQVYYDKDAD…GGTKGGVIET (180 aa)). NADP(+) contacts are provided by residues 24 to 27 (YGSQ), arginine 47, and serine 51. The active site involves histidine 106. Glycine 132 contributes to the NADP(+) binding site. A KARI C-terminal knotted domain is found at 181–326 (TFREETETDL…ARLRAMMPWI (146 aa)). Residues aspartate 189, glutamate 193, glutamate 225, and glutamate 229 each contribute to the Mg(2+) site. Position 250 (serine 250) interacts with substrate.

This sequence belongs to the ketol-acid reductoisomerase family. Mg(2+) serves as cofactor.

It carries out the reaction (2R)-2,3-dihydroxy-3-methylbutanoate + NADP(+) = (2S)-2-acetolactate + NADPH + H(+). It catalyses the reaction (2R,3R)-2,3-dihydroxy-3-methylpentanoate + NADP(+) = (S)-2-ethyl-2-hydroxy-3-oxobutanoate + NADPH + H(+). The protein operates within amino-acid biosynthesis; L-isoleucine biosynthesis; L-isoleucine from 2-oxobutanoate: step 2/4. Its pathway is amino-acid biosynthesis; L-valine biosynthesis; L-valine from pyruvate: step 2/4. Functionally, involved in the biosynthesis of branched-chain amino acids (BCAA). Catalyzes an alkyl-migration followed by a ketol-acid reduction of (S)-2-acetolactate (S2AL) to yield (R)-2,3-dihydroxy-isovalerate. In the isomerase reaction, S2AL is rearranged via a Mg-dependent methyl migration to produce 3-hydroxy-3-methyl-2-ketobutyrate (HMKB). In the reductase reaction, this 2-ketoacid undergoes a metal-dependent reduction by NADPH to yield (R)-2,3-dihydroxy-isovalerate. The sequence is that of Ketol-acid reductoisomerase (NADP(+)) from Neisseria gonorrhoeae (strain ATCC 700825 / FA 1090).